Consider the following 505-residue polypeptide: Glutamate--cysteine ligase (505 aa).

It belongs to the glutamate--cysteine ligase type 1 family. Type 1 subfamily.

The enzyme catalyses L-cysteine + L-glutamate + ATP = gamma-L-glutamyl-L-cysteine + ADP + phosphate + H(+). It functions in the pathway sulfur metabolism; glutathione biosynthesis; glutathione from L-cysteine and L-glutamate: step 1/2. This chain is Glutamate--cysteine ligase, found in Wigglesworthia glossinidia brevipalpis.